The following is a 283-amino-acid chain: Polyamine aminopropyltransferase (283 aa).

A PABS domain is found at 2–237 (ELWYTEEHTD…GHWLFGFASK (236 aa)). Gln31 contributes to the S-methyl-5'-thioadenosine binding site. Residues His62 and Asp86 each coordinate spermidine. S-methyl-5'-thioadenosine-binding positions include Glu106 and 137–138 (DG). The Proton acceptor role is filled by Asp155. 155–158 (DSTD) is a binding site for spermidine. Pro162 is an S-methyl-5'-thioadenosine binding site.

The protein belongs to the spermidine/spermine synthase family. As to quaternary structure, homodimer or homotetramer.

It localises to the cytoplasm. The enzyme catalyses S-adenosyl 3-(methylsulfanyl)propylamine + putrescine = S-methyl-5'-thioadenosine + spermidine + H(+). It participates in amine and polyamine biosynthesis; spermidine biosynthesis; spermidine from putrescine: step 1/1. Catalyzes the irreversible transfer of a propylamine group from the amino donor S-adenosylmethioninamine (decarboxy-AdoMet) to putrescine (1,4-diaminobutane) to yield spermidine. The chain is Polyamine aminopropyltransferase from Clostridium perfringens (strain SM101 / Type A).